The following is a 120-amino-acid chain: MRHRKSGAKLNRTSSHRKAMFRNMVTSLFKHSSIKTTEAKAKELRKLADKMVTLAKRGDLHARRQAFSIIREKDVVHQLFNDAPSKFASRQGGYTRITKLGLRSGDAAPMTTIELICDEV.

Belongs to the bacterial ribosomal protein bL17 family. Part of the 50S ribosomal subunit. Contacts protein L32.

The chain is Large ribosomal subunit protein bL17 from Desulforapulum autotrophicum (strain ATCC 43914 / DSM 3382 / VKM B-1955 / HRM2) (Desulfobacterium autotrophicum).